The primary structure comprises 228 residues: Ribose-5-phosphate isomerase A (228 aa).

Residues 32-35 (TGST), 85-88 (DGAD), and 98-101 (KGGG) each bind substrate. Glu107 serves as the catalytic Proton acceptor. Residue Lys125 coordinates substrate.

Belongs to the ribose 5-phosphate isomerase family. Homodimer.

It carries out the reaction aldehydo-D-ribose 5-phosphate = D-ribulose 5-phosphate. It participates in carbohydrate degradation; pentose phosphate pathway; D-ribose 5-phosphate from D-ribulose 5-phosphate (non-oxidative stage): step 1/1. Functionally, catalyzes the reversible conversion of ribose-5-phosphate to ribulose 5-phosphate. The chain is Ribose-5-phosphate isomerase A from Cupriavidus taiwanensis (strain DSM 17343 / BCRC 17206 / CCUG 44338 / CIP 107171 / LMG 19424 / R1) (Ralstonia taiwanensis (strain LMG 19424)).